The primary structure comprises 299 residues: Ribosomal protein L11 methyltransferase (299 aa).

Residues Thr149, Gly170, Asp192, and Asn234 each coordinate S-adenosyl-L-methionine.

It belongs to the methyltransferase superfamily. PrmA family.

Its subcellular location is the cytoplasm. It catalyses the reaction L-lysyl-[protein] + 3 S-adenosyl-L-methionine = N(6),N(6),N(6)-trimethyl-L-lysyl-[protein] + 3 S-adenosyl-L-homocysteine + 3 H(+). Its function is as follows. Methylates ribosomal protein L11. The protein is Ribosomal protein L11 methyltransferase of Chromohalobacter salexigens (strain ATCC BAA-138 / DSM 3043 / CIP 106854 / NCIMB 13768 / 1H11).